We begin with the raw amino-acid sequence, 308 residues long: Aspartate carbamoyltransferase catalytic subunit (308 aa).

Residues Arg51 and Thr52 each contribute to the carbamoyl phosphate site. L-aspartate is bound at residue Lys79. Arg101, His130, and Gln133 together coordinate carbamoyl phosphate. Residues Arg163 and Arg215 each coordinate L-aspartate. Residues Ala258 and Pro259 each coordinate carbamoyl phosphate.

The protein belongs to the aspartate/ornithine carbamoyltransferase superfamily. ATCase family. As to quaternary structure, heterododecamer (2C3:3R2) of six catalytic PyrB chains organized as two trimers (C3), and six regulatory PyrI chains organized as three dimers (R2).

It carries out the reaction carbamoyl phosphate + L-aspartate = N-carbamoyl-L-aspartate + phosphate + H(+). Its pathway is pyrimidine metabolism; UMP biosynthesis via de novo pathway; (S)-dihydroorotate from bicarbonate: step 2/3. Functionally, catalyzes the condensation of carbamoyl phosphate and aspartate to form carbamoyl aspartate and inorganic phosphate, the committed step in the de novo pyrimidine nucleotide biosynthesis pathway. The protein is Aspartate carbamoyltransferase catalytic subunit of Pediococcus pentosaceus (strain ATCC 25745 / CCUG 21536 / LMG 10740 / 183-1w).